Reading from the N-terminus, the 483-residue chain is Aspartyl/glutamyl-tRNA(Asn/Gln) amidotransferase subunit B (483 aa).

Belongs to the GatB/GatE family. GatB subfamily. In terms of assembly, heterotrimer of A, B and C subunits.

It catalyses the reaction L-glutamyl-tRNA(Gln) + L-glutamine + ATP + H2O = L-glutaminyl-tRNA(Gln) + L-glutamate + ADP + phosphate + H(+). The enzyme catalyses L-aspartyl-tRNA(Asn) + L-glutamine + ATP + H2O = L-asparaginyl-tRNA(Asn) + L-glutamate + ADP + phosphate + 2 H(+). In terms of biological role, allows the formation of correctly charged Asn-tRNA(Asn) or Gln-tRNA(Gln) through the transamidation of misacylated Asp-tRNA(Asn) or Glu-tRNA(Gln) in organisms which lack either or both of asparaginyl-tRNA or glutaminyl-tRNA synthetases. The reaction takes place in the presence of glutamine and ATP through an activated phospho-Asp-tRNA(Asn) or phospho-Glu-tRNA(Gln). This Rickettsia rickettsii (strain Iowa) protein is Aspartyl/glutamyl-tRNA(Asn/Gln) amidotransferase subunit B.